The primary structure comprises 773 residues: Probable C-mannosyltransferase DPY19L2 (773 aa).

Residues 1 to 45 are disordered; sequence MVGPTRSKLREGSSDRPQSSCTGQARRRWSAATMEPQQERSAPQE. Over 1–122 the chain is Nuclear; it reads MVGPTRSKLR…ALQMHRFSHR (122 aa). The helical transmembrane segment at 123 to 143 threads the bilayer; sequence TLFGLAIFVGILHWLHLITLF. The Perinuclear space segment spans residues 144 to 209; sequence ENDHHFSHLS…INTVKRFHLY (66 aa). The helical transmembrane segment at 210–230 threads the bilayer; that stretch reads PEVVIAYWYRTIIGIMNLFGI. The Nuclear portion of the chain corresponds to 231–256; the sequence is ETKTCWNVTRMEPLNEVQSCEGLGDP. The helical transmembrane segment at 257-277 threads the bilayer; that stretch reads ACFYIGVIFILNGLMMGLFFI. At 278 to 311 the chain is on the perinuclear space side; it reads YSTYLSGSQLGGLITVACYFFNHGEATRVMWTPP. A helical transmembrane segment spans residues 312–332; it reads LRESFSYPFLVLQMYILTIIL. Residues 333–358 are Nuclear-facing; sequence RTSTVHKKHYMALCFSNVAFMLPWQF. Residues 359–379 form a helical membrane-spanning segment; sequence AQFILFTQIASLFPMYVVGYI. The Perinuclear space segment spans residues 380-386; the sequence is EPSKFQK. A helical transmembrane segment spans residues 387–407; it reads IIYVNMSSVALCFILMFGNSM. Residues 408–437 lie on the Nuclear side of the membrane; the sequence is YLSSYYSSCLLVTWAIMQKKSKIQKLGGTE. Residues 438–458 form a helical membrane-spanning segment; sequence LQFWLIQGCFWWCGTIILKFL. Topologically, residues 459 to 507 are perinuclear space; the sequence is TSKICGVSDHIRLSDLIAARILRYTDFDTLIYTCAPEFDFMEQATPLRY. The helical transmembrane segment at 508-528 threads the bilayer; that stretch reads IKTLLLPLILVITYLIFKKIV. Over 529–548 the chain is Nuclear; that stretch reads RDIMCVLYTNTYVRKQLLDN. Residues 549 to 569 traverse the membrane as a helical segment; sequence AELIFHTLQLLAFTGLAILIM. Residues 570–590 lie on the Perinuclear space side of the membrane; that stretch reads RLKLFLTPHMCIMASLICSQR. Residues 591–611 form a helical membrane-spanning segment; it reads LFGWLFCRIHFENVVFGILTM. The Nuclear portion of the chain corresponds to 612 to 773; it reads MSIQGCANLH…NSMYRVLKIN (162 aa).

It belongs to the dpy-19 family. Interacts with FAM209. Predominantly expressed in testis. Present in testis but absent from epididymal sperm (at protein level).

The protein resides in the nucleus inner membrane. In terms of biological role, probable C-mannosyltransferase that mediates C-mannosylation of tryptophan residues on target proteins. Functionally, required during spermatogenesis for sperm head elongation and acrosome formation. Also plays a role in acrosome attachment to the nuclear envelope. In Mus musculus (Mouse), this protein is Probable C-mannosyltransferase DPY19L2 (Dpy19l2).